The primary structure comprises 229 residues: Urease accessory protein UreF (229 aa).

It belongs to the UreF family. UreD, UreF and UreG form a complex that acts as a GTP-hydrolysis-dependent molecular chaperone, activating the urease apoprotein by helping to assemble the nickel containing metallocenter of UreC. The UreE protein probably delivers the nickel.

The protein localises to the cytoplasm. Required for maturation of urease via the functional incorporation of the urease nickel metallocenter. The protein is Urease accessory protein UreF of Staphylococcus aureus (strain MRSA252).